The primary structure comprises 156 residues: ATP synthase subunit b (156 aa).

The chain crosses the membrane as a helical span at residues 3-23 (ITFTIFAQSLAFAALIWIVAT).

Belongs to the ATPase B chain family. As to quaternary structure, F-type ATPases have 2 components, F(1) - the catalytic core - and F(0) - the membrane proton channel. F(1) has five subunits: alpha(3), beta(3), gamma(1), delta(1), epsilon(1). F(0) has three main subunits: a(1), b(2) and c(10-14). The alpha and beta chains form an alternating ring which encloses part of the gamma chain. F(1) is attached to F(0) by a central stalk formed by the gamma and epsilon chains, while a peripheral stalk is formed by the delta and b chains.

The protein localises to the cell inner membrane. F(1)F(0) ATP synthase produces ATP from ADP in the presence of a proton or sodium gradient. F-type ATPases consist of two structural domains, F(1) containing the extramembraneous catalytic core and F(0) containing the membrane proton channel, linked together by a central stalk and a peripheral stalk. During catalysis, ATP synthesis in the catalytic domain of F(1) is coupled via a rotary mechanism of the central stalk subunits to proton translocation. In terms of biological role, component of the F(0) channel, it forms part of the peripheral stalk, linking F(1) to F(0). The protein is ATP synthase subunit b of Xylella fastidiosa (strain 9a5c).